An 871-amino-acid chain; its full sequence is MGRLRVLLLWLAWWLSQAGIAHGAGSVRLAGGLTLGGLFPVHARGAAGRACGTLKKEQGVHRLEAMLYALDRINADPELLPGVRLGARLLDTCSRDTYALEQALSFVQALIRGRGDGEEASVRCPGGVPPLRAAPPERVVAVVGASASSVSIMVANVLRLFAIPQISYASTAPELSDSTRYDFFSRVVPPDSYQAQAMVDIVRALGWNYVSTLASEGNYGESGVEAFVQISREAGGVCIAQSIKIPREPKPGEFHKVIRRLMETPNARGIIIFANEDDIRRVLEATRQANLTGHFLWVGSDSWGSKISPILNLEEEAVGAITILPKRASIDGFDQYFMTRSLENNRRNIWFAEFWEENFNCKLTSSGGQSDDSTRKCTGEERIGQDSTYEQEGKVQFVIDAVYAIAHALHSMHQALCPGHTGLCPAMEPTDGRTLLHYIRAVRFNGSAGTPVMFNENGDAPGRYDIFQYQATNGSASSGGYQAVGQWAEALRLDMEALQWSGDPHEVPPSQCSLPCGPGERKKMVKGVPCCWHCEACDGYRFQVDEFTCEACPGHMRPTPNHTGCRPTPVVRLTWSSPWAALPLLLAVLGIMATTTIIATFMRHNDTPIVRASGRELSYVLLTGIFLIYAITFLMVAEPCAAVCASRRLLLGLGTTLSYSALLTKTNRIYRIFEQGKRSVTPPPFISPTSQLVITFGLTSLQVVGVIAWLGAQPPHSVIDYEEQRTVDPEQARGVLKCDMSDLSLIGCLGYSLLLMVTCTVYAIKARGVPETFNEAKPIGFTMYTTCIIWLAFVPIFFGTAQSAEKIYIQTTTLTVSLSLSASVSLGMLYVPKTYVILFHPEQNVQKRKRSLKKTSTMAAPPKSENSEDAK.

An N-terminal signal peptide occupies residues Met1–Gly23. The Extracellular portion of the chain corresponds to Ala24–Trp579. Cys51 and Cys93 are disulfide-bonded. Residues Ser148, Ala169–Thr171, and Tyr219 each bind L-glutamate. Cystine bridges form between Cys238–Cys530, Cys361–Cys377, Cys417–Cys424, Cys512–Cys531, Cys516–Cys534, Cys537–Cys549, and Cys552–Cys565. A glycan (N-linked (GlcNAc...) asparagine) is linked at Asn290. Asp301 serves as a coordination point for L-glutamate. Lys394 lines the L-glutamate pocket. Residues Asn445 and Asn473 are each glycosylated (N-linked (GlcNAc...) asparagine). Asn561 carries an N-linked (GlcNAc...) asparagine glycan. Residues Ala580–Met602 traverse the membrane as a helical segment. Over Arg603 to Glu616 the chain is Cytoplasmic. Residues Leu617–Ala637 traverse the membrane as a helical segment. At Glu638–Arg648 the chain is on the extracellular side. Residues Leu649–Asn667 form a helical membrane-spanning segment. At Arg668 to Gln691 the chain is on the cytoplasmic side. A helical membrane pass occupies residues Leu692–Ala712. The Extracellular segment spans residues Gln713 to Asp742. A helical transmembrane segment spans residues Leu743 to Ile764. Residues Lys765–Lys777 lie on the Cytoplasmic side of the membrane. A helical membrane pass occupies residues Pro778–Thr800. The Extracellular segment spans residues Ala801–Thr813. Residues Leu814–Phe839 traverse the membrane as a helical segment. Over His840–Lys871 the chain is Cytoplasmic. Residues Arg848–Lys871 are disordered.

The protein belongs to the G-protein coupled receptor 3 family. Homodimer. Interacts with GPR179. Interacts with photoreceptor synaptic protein LRIT1 (via its N-terminal extracellular domain). In terms of tissue distribution, detected in the outer plexiform layer in retina (at protein level).

The protein localises to the cell membrane. It localises to the endoplasmic reticulum membrane. Its subcellular location is the golgi apparatus membrane. The protein resides in the cell projection. It is found in the dendrite. In terms of biological role, G-protein coupled receptor for glutamate. Ligand binding causes a conformation change that triggers signaling via guanine nucleotide-binding proteins (G proteins) and modulates the activity of down-stream effectors, such as adenylate cyclase. Signaling inhibits adenylate cyclase activity. Signaling stimulates TRPM1 channel activity and Ca(2+) uptake. Required for normal vision. This is Metabotropic glutamate receptor 6 (Grm6) from Mus musculus (Mouse).